Consider the following 443-residue polypeptide: MKEIGALQAEYPLVNKLIATEEVFWINPNIEKYETAIKDSPLNEENVKDAEERLKRFAPYIAKVFPETKGANGIIESPLVKIPSMKEALERKYEQPILGELLLKCDSHLPISGSIKARGGIYEVLKHAEQLALQHGMVTEEDNYSVLDSDTCREFFSKYSIAVGSTGNLGLSIGIMSANLGFNVTVHMSADAKEWKKDLLRSKGVNVIEYEDDYSKAVEEGRRQADADPSCYFVDDENSHDLFLGYAVAASRLQKQLEELEVVVDENHPLFVYLPCGVGGGPGGVAFGLKLLYKDNVHCYFAEPTHSPCMLLGLMTGLHDKISVQDIGIDNVTDADGLAVGRPSGFVGKTMEPFLSGNYTVSDEELYRLLKELADTENIYLEPSALAGMIGPVKVCKEDEYLQKLQLTEKVKKGTHIVWGTGGSMVPNDTMDEYYRKGLELTI.

At Lys116 the chain carries N6-(pyridoxal phosphate)lysine.

This sequence belongs to the serine/threonine dehydratase family. DsdA subfamily. Pyridoxal 5'-phosphate is required as a cofactor.

The enzyme catalyses D-serine = pyruvate + NH4(+). The chain is Probable D-serine dehydratase from Bacillus cereus (strain ATCC 14579 / DSM 31 / CCUG 7414 / JCM 2152 / NBRC 15305 / NCIMB 9373 / NCTC 2599 / NRRL B-3711).